Consider the following 169-residue polypeptide: uncharacterized protein (169 aa).

This is an uncharacterized protein from Saccharomyces cerevisiae (strain ATCC 204508 / S288c) (Baker's yeast).